Consider the following 426-residue polypeptide: Histidinol dehydrogenase (426 aa).

NAD(+) is bound by residues Y130, Q187, and N210. Residues S233, Q255, and H258 each contribute to the substrate site. Residues Q255 and H258 each contribute to the Zn(2+) site. Residues E323 and H324 each act as proton acceptor in the active site. Substrate is bound by residues H324, D357, E411, and H416. D357 provides a ligand contact to Zn(2+). Zn(2+) is bound at residue H416.

This sequence belongs to the histidinol dehydrogenase family. Zn(2+) serves as cofactor.

The catalysed reaction is L-histidinol + 2 NAD(+) + H2O = L-histidine + 2 NADH + 3 H(+). It participates in amino-acid biosynthesis; L-histidine biosynthesis; L-histidine from 5-phospho-alpha-D-ribose 1-diphosphate: step 9/9. Catalyzes the sequential NAD-dependent oxidations of L-histidinol to L-histidinaldehyde and then to L-histidine. The chain is Histidinol dehydrogenase (hisD) from Aquifex aeolicus (strain VF5).